Here is a 390-residue protein sequence, read N- to C-terminus: Putative MSV199 domain-containing protein 211L (390 aa).

Positions 181–263 (HDRKAQEEKE…FDLSDVRDRL (83 aa)) form a coiled coil.

The chain is Putative MSV199 domain-containing protein 211L from Acheta domesticus (House cricket).